A 181-amino-acid polypeptide reads, in one-letter code: 6,7-dimethyl-8-ribityllumazine synthase (181 aa).

5-amino-6-(D-ribitylamino)uracil contacts are provided by residues Phe23, 61–63, and 85–87; these read SFE and AVI. Position 90–91 (90–91) interacts with (2S)-2-hydroxy-3-oxobutyl phosphate; that stretch reads QT. His93 serves as the catalytic Proton donor. Phe118 provides a ligand contact to 5-amino-6-(D-ribitylamino)uracil. Residue Arg132 coordinates (2S)-2-hydroxy-3-oxobutyl phosphate.

It belongs to the DMRL synthase family.

It carries out the reaction (2S)-2-hydroxy-3-oxobutyl phosphate + 5-amino-6-(D-ribitylamino)uracil = 6,7-dimethyl-8-(1-D-ribityl)lumazine + phosphate + 2 H2O + H(+). It participates in cofactor biosynthesis; riboflavin biosynthesis; riboflavin from 2-hydroxy-3-oxobutyl phosphate and 5-amino-6-(D-ribitylamino)uracil: step 1/2. Catalyzes the formation of 6,7-dimethyl-8-ribityllumazine by condensation of 5-amino-6-(D-ribitylamino)uracil with 3,4-dihydroxy-2-butanone 4-phosphate. This is the penultimate step in the biosynthesis of riboflavin. The protein is 6,7-dimethyl-8-ribityllumazine synthase of Synechococcus elongatus (strain ATCC 33912 / PCC 7942 / FACHB-805) (Anacystis nidulans R2).